The sequence spans 276 residues: Release factor glutamine methyltransferase (276 aa).

Residues 117 to 121, aspartate 140, tryptophan 168, and asparagine 182 contribute to the S-adenosyl-L-methionine site; that span reads GTGTG. 182–185 lines the substrate pocket; that stretch reads NPPY.

The protein belongs to the protein N5-glutamine methyltransferase family. PrmC subfamily.

It carries out the reaction L-glutaminyl-[peptide chain release factor] + S-adenosyl-L-methionine = N(5)-methyl-L-glutaminyl-[peptide chain release factor] + S-adenosyl-L-homocysteine + H(+). In terms of biological role, methylates the class 1 translation termination release factors RF1/PrfA and RF2/PrfB on the glutamine residue of the universally conserved GGQ motif. This is Release factor glutamine methyltransferase from Yersinia pestis.